The following is a 736-amino-acid chain: 1,4-alpha-glucan branching enzyme GlgB (736 aa).

Aspartate 415 functions as the Nucleophile in the catalytic mechanism. Residue glutamate 470 is the Proton donor of the active site.

The protein belongs to the glycosyl hydrolase 13 family. GlgB subfamily. Monomer.

It carries out the reaction Transfers a segment of a (1-&gt;4)-alpha-D-glucan chain to a primary hydroxy group in a similar glucan chain.. It functions in the pathway glycan biosynthesis; glycogen biosynthesis. Its function is as follows. Catalyzes the formation of the alpha-1,6-glucosidic linkages in glycogen by scission of a 1,4-alpha-linked oligosaccharide from growing alpha-1,4-glucan chains and the subsequent attachment of the oligosaccharide to the alpha-1,6 position. This Burkholderia orbicola (strain AU 1054) protein is 1,4-alpha-glucan branching enzyme GlgB.